Reading from the N-terminus, the 512-residue chain is Maturase K (512 aa).

The protein belongs to the intron maturase 2 family. MatK subfamily.

The protein localises to the plastid. It localises to the chloroplast. Usually encoded in the trnK tRNA gene intron. Probably assists in splicing its own and other chloroplast group II introns. This chain is Maturase K, found in Dalea wrightii (Wright's prairie clover).